The chain runs to 309 residues: Vomeronasal type-1 receptor 52 (309 aa).

Residues 1–19 (MNKDHTLYCSVYIRNAFFS) are Extracellular-facing. A helical membrane pass occupies residues 20-40 (EIGIGISANSCLLLFHTFMFI). The Cytoplasmic portion of the chain corresponds to 41–49 (RGHRPRLTD). The chain crosses the membrane as a helical span at residues 50–70 (LPIGFVALIHLVMLLLAAYIT). The Extracellular portion of the chain corresponds to 71-93 (EDFFMSSGGWDDITCKLVIFLHR). Cys-85 and Cys-172 form a disulfide bridge. Residues 94 to 114 (FFRSLSVCATCLLSVFQAIIL) traverse the membrane as a helical segment. The Cytoplasmic portion of the chain corresponds to 115 to 134 (CPQSSHLAKLKQNSPHQLSY). Residues 135–155 (FFIFLSIFYTSISSHILIAAI) traverse the membrane as a helical segment. The Extracellular segment spans residues 156–187 (PTQNITFVNLIYITNSCSFLPLSSSMQHTFST). N-linked (GlcNAc...) asparagine glycosylation occurs at Asn-159. Residues 188-208 (LLAFRNVFVIGLMGLSTCYMA) form a helical membrane-spanning segment. The Cytoplasmic segment spans residues 209 to 238 (TLLCRHKTRSQRLQNSKLSPKATPEQRALR). Residues 239–259 (TILMLMSFFLLMSTFDSIISY) traverse the membrane as a helical segment. Residues 260-268 (SRTILQGNP) lie on the Extracellular side of the membrane. Residues 269–289 (LPFCFQILVAHSYAAVSPLLV) form a helical membrane-spanning segment. Residues 290 to 309 (LSNEKRITNLLISMYEKIVL) lie on the Cytoplasmic side of the membrane.

The protein belongs to the G-protein coupled receptor 1 family.

Its subcellular location is the cell membrane. Putative pheromone receptor implicated in the regulation of social and reproductive behavior. This Mus musculus (Mouse) protein is Vomeronasal type-1 receptor 52 (Vmn1r52).